A 277-amino-acid polypeptide reads, in one-letter code: 3-methyl-2-oxobutanoate hydroxymethyltransferase (277 aa).

2 residues coordinate Mg(2+): D53 and D96. 3-methyl-2-oxobutanoate-binding positions include 53–54 (DS), D96, and K126. E128 serves as a coordination point for Mg(2+). The Proton acceptor role is filled by E195.

It belongs to the PanB family. In terms of assembly, homodecamer; pentamer of dimers. Mg(2+) serves as cofactor.

It localises to the cytoplasm. The enzyme catalyses 3-methyl-2-oxobutanoate + (6R)-5,10-methylene-5,6,7,8-tetrahydrofolate + H2O = 2-dehydropantoate + (6S)-5,6,7,8-tetrahydrofolate. It functions in the pathway cofactor biosynthesis; (R)-pantothenate biosynthesis; (R)-pantoate from 3-methyl-2-oxobutanoate: step 1/2. In terms of biological role, catalyzes the reversible reaction in which hydroxymethyl group from 5,10-methylenetetrahydrofolate is transferred onto alpha-ketoisovalerate to form ketopantoate. This chain is 3-methyl-2-oxobutanoate hydroxymethyltransferase, found in Chlorobium luteolum (strain DSM 273 / BCRC 81028 / 2530) (Pelodictyon luteolum).